The sequence spans 180 residues: Protein C2-DOMAIN ABA-RELATED 10 (180 aa).

Positions 1–105 (MDQKPLGLLT…EALKMGMELL (105 aa)) constitute a C2 domain. Residues Arg-22, Asp-23, Asp-28, Asp-74, Trp-75, Asp-76, and Asp-82 each coordinate Ca(2+).

The protein belongs to the plant CAR protein family. As to quaternary structure, binds to PYR/PYL/RCAR abscisic acid intracellular receptors in an ABA-independent manner, both at the plasma membrane and in the nucleus.

Its subcellular location is the cell membrane. The protein resides in the nucleus. Functionally, stimulates the GTPase/ATPase activities of Obg-like ATPases. Mediates the transient calcium-dependent interaction of PYR/PYL/RCAR abscisic acid (ABA) receptors with the plasma membrane and thus regulates ABA sensitivity. The protein is Protein C2-DOMAIN ABA-RELATED 10 of Arabidopsis thaliana (Mouse-ear cress).